The following is a 601-amino-acid chain: ATP-dependent RNA helicase DeaD (601 aa).

The Q motif motif lies at 6 to 34 (STFSFLGLNPFIIKSLSKMGYVKPSPIQA). The Helicase ATP-binding domain maps to 37–208 (IPLLLEGRDV…KRFMKNPQEI (172 aa)). Residue 50 to 57 (AQTGSGKT) participates in ATP binding. A DEAD box motif is present at residues 156 to 159 (DEAD). Residues 231–378 (KTDALIRFLE…EVQLPKIEVL (148 aa)) form the Helicase C-terminal domain. Residues 564–581 (SIFNKDKNNKRRFSDNRL) show a composition bias toward basic and acidic residues. The interval 564-601 (SIFNKDKNNKRRFSDNRLNKSSSIKNETKSSFFRRKSV) is disordered. Positions 582–594 (NKSSSIKNETKSS) are enriched in polar residues.

The protein belongs to the DEAD box helicase family. DeaD/CsdA subfamily.

It is found in the cytoplasm. The catalysed reaction is ATP + H2O = ADP + phosphate + H(+). DEAD-box RNA helicase involved in various cellular processes at low temperature, including ribosome biogenesis, mRNA degradation and translation initiation. This is ATP-dependent RNA helicase DeaD from Buchnera aphidicola subsp. Schizaphis graminum (strain Sg).